A 114-amino-acid polypeptide reads, in one-letter code: ATP-dependent Clp protease adapter protein ClpS (114 aa).

This sequence belongs to the ClpS family. Binds to the N-terminal domain of the chaperone ClpA.

Its function is as follows. Involved in the modulation of the specificity of the ClpAP-mediated ATP-dependent protein degradation. In Bdellovibrio bacteriovorus (strain ATCC 15356 / DSM 50701 / NCIMB 9529 / HD100), this protein is ATP-dependent Clp protease adapter protein ClpS.